The primary structure comprises 440 residues: Probable pectate lyase 10 (440 aa).

Residues 1–28 (MVIFSRSFLALSTTLIILALCINSSTMA) form the signal peptide. Residues 32 to 56 (EDLNSHSSSNSSTANKLPNDDGAWN) are disordered. N-linked (GlcNAc...) asparagine glycans are attached at residues asparagine 41 and asparagine 76. Ca(2+) contacts are provided by aspartate 238, aspartate 262, and aspartate 266. Residue arginine 318 is part of the active site.

It belongs to the polysaccharide lyase 1 family. It depends on Ca(2+) as a cofactor.

The catalysed reaction is Eliminative cleavage of (1-&gt;4)-alpha-D-galacturonan to give oligosaccharides with 4-deoxy-alpha-D-galact-4-enuronosyl groups at their non-reducing ends.. It participates in glycan metabolism; pectin degradation; 2-dehydro-3-deoxy-D-gluconate from pectin: step 2/5. The polypeptide is Probable pectate lyase 10 (Arabidopsis thaliana (Mouse-ear cress)).